A 292-amino-acid polypeptide reads, in one-letter code: Protoheme IX farnesyltransferase (292 aa).

Helical transmembrane passes span Ile-13–Ile-33, Ile-35–Val-55, Val-84–Val-104, Gly-106–Trp-126, Thr-135–His-155, Ala-161–Ile-181, Ile-206–Gly-226, Phe-231–Phe-251, and Phe-263–Gln-283.

This sequence belongs to the UbiA prenyltransferase family. Protoheme IX farnesyltransferase subfamily.

It is found in the cell inner membrane. It carries out the reaction heme b + (2E,6E)-farnesyl diphosphate + H2O = Fe(II)-heme o + diphosphate. Its pathway is porphyrin-containing compound metabolism; heme O biosynthesis; heme O from protoheme: step 1/1. In terms of biological role, converts heme B (protoheme IX) to heme O by substitution of the vinyl group on carbon 2 of heme B porphyrin ring with a hydroxyethyl farnesyl side group. The protein is Protoheme IX farnesyltransferase of Acinetobacter baumannii (strain AB307-0294).